The following is a 264-amino-acid chain: H-2 class II histocompatibility antigen, I-E beta chain (264 aa).

Positions 1 to 31 (MVWLPRVPCVAAVILLLTVLSPPVALVRNSR) are cleaved as a signal peptide. Positions 32–121 (PRFLEYSTSE…IFDNFLVPRR (90 aa)) are beta-1. Residues 32 to 225 (PRFLEYSTSE…KAQSTSAQNK (194 aa)) are Extracellular-facing. Intrachain disulfides connect cysteine 42–cysteine 106 and cysteine 144–cysteine 200. The N-linked (GlcNAc...) asparagine glycan is linked to asparagine 46. The tract at residues 122-215 (VEPTVTVYPT…SLTDPVTVEW (94 aa)) is beta-2. The 91-residue stretch at 124-214 (PTVTVYPTKT…PSLTDPVTVE (91 aa)) folds into the Ig-like C1-type domain. The segment at 216 to 225 (KAQSTSAQNK) is connecting peptide. The helical transmembrane segment at 226 to 248 (MLSGVGGFVLGLLFLGAGLFIYF) threads the bilayer. The Cytoplasmic segment spans residues 249-264 (RNQKGQSGLQPTGLLS).

This sequence belongs to the MHC class II family. Post-translationally, ubiquitinated in immature dendritic cells leading to down-regulation of MHC class II.

It is found in the membrane. This is H-2 class II histocompatibility antigen, I-E beta chain (H2-Eb1) from Mus musculus (Mouse).